Consider the following 211-residue polypeptide: MRKYIKIGVAGPVGAGKTALIERLTREIASKYSVAVITNDIYTQEDAEFLTKNSLLPPERIMGVETGGCPHTAIREDASMNLEAVDEMVARFPEVELIFIESGGDNLSATFSPDLADVTIFVIDVAQGEKIPRKGGPGITRSDLLVINKTDLAPFVGADLSVMKRDARRMRNGQPFIFTNLMKNENLDGVIGWIEKYALLKNIEDPASLVR.

11-18 (GPVGAGKT) contacts GTP.

This sequence belongs to the SIMIBI class G3E GTPase family. UreG subfamily. As to quaternary structure, homodimer. UreD, UreF and UreG form a complex that acts as a GTP-hydrolysis-dependent molecular chaperone, activating the urease apoprotein by helping to assemble the nickel containing metallocenter of UreC. The UreE protein probably delivers the nickel.

It localises to the cytoplasm. In terms of biological role, facilitates the functional incorporation of the urease nickel metallocenter. This process requires GTP hydrolysis, probably effectuated by UreG. The sequence is that of Urease accessory protein UreG from Actinobacillus pleuropneumoniae serotype 7 (strain AP76).